The primary structure comprises 105 residues: Large ribosomal subunit protein uL24 (105 aa).

The protein belongs to the universal ribosomal protein uL24 family. As to quaternary structure, part of the 50S ribosomal subunit.

One of two assembly initiator proteins, it binds directly to the 5'-end of the 23S rRNA, where it nucleates assembly of the 50S subunit. Functionally, one of the proteins that surrounds the polypeptide exit tunnel on the outside of the subunit. In Aliivibrio salmonicida (strain LFI1238) (Vibrio salmonicida (strain LFI1238)), this protein is Large ribosomal subunit protein uL24.